Reading from the N-terminus, the 718-residue chain is Pullulanase (718 aa).

Aspartate 406 functions as the Nucleophile in the catalytic mechanism. Glutamate 435 serves as the catalytic Proton donor.

This sequence belongs to the glycosyl hydrolase 13 family.

The catalysed reaction is Hydrolysis of (1-&gt;6)-alpha-D-glucosidic linkages in pullulan, amylopectin and glycogen, and in the alpha- and beta-limit dextrins of amylopectin and glycogen.. This chain is Pullulanase (amyX), found in Bacillus subtilis (strain 168).